The sequence spans 295 residues: Shikimate dehydrogenase (NADP(+)) (295 aa).

Shikimate contacts are provided by residues 21–23 (SLS) and Thr-68. Lys-72 (proton acceptor) is an active-site residue. Shikimate is bound by residues Asn-93 and Asp-108. NADP(+) contacts are provided by residues 132–136 (GAGGA), 156–161 (NRTPER), and Leu-228. Tyr-230 provides a ligand contact to shikimate. Gly-251 serves as a coordination point for NADP(+).

It belongs to the shikimate dehydrogenase family. In terms of assembly, homodimer.

The enzyme catalyses shikimate + NADP(+) = 3-dehydroshikimate + NADPH + H(+). Its pathway is metabolic intermediate biosynthesis; chorismate biosynthesis; chorismate from D-erythrose 4-phosphate and phosphoenolpyruvate: step 4/7. Its function is as follows. Involved in the biosynthesis of the chorismate, which leads to the biosynthesis of aromatic amino acids. Catalyzes the reversible NADPH linked reduction of 3-dehydroshikimate (DHSA) to yield shikimate (SA). The sequence is that of Shikimate dehydrogenase (NADP(+)) from Moorella thermoacetica (strain ATCC 39073 / JCM 9320).